We begin with the raw amino-acid sequence, 71 residues long: Ranatuerin-2PLa (71 aa).

A signal peptide spans 1-22 (MFTTKKSMLLFFFLGTISLSLC). Residues 23–41 (EQERGADEDDGVEMTEEEV) constitute a propeptide that is removed on maturation. Cysteine 66 and cysteine 71 form a disulfide bridge.

In terms of tissue distribution, expressed by the skin glands.

It localises to the secreted. Its function is as follows. May have antimicrobial activity against the Gram-negative bacterium E.coli. This is Ranatuerin-2PLa from Lithobates palustris (Pickerel frog).